A 287-amino-acid polypeptide reads, in one-letter code: 2-dehydro-3-deoxyphosphooctonate aldolase (287 aa).

The protein belongs to the KdsA family.

The protein localises to the cytoplasm. The enzyme catalyses D-arabinose 5-phosphate + phosphoenolpyruvate + H2O = 3-deoxy-alpha-D-manno-2-octulosonate-8-phosphate + phosphate. The protein operates within carbohydrate biosynthesis; 3-deoxy-D-manno-octulosonate biosynthesis; 3-deoxy-D-manno-octulosonate from D-ribulose 5-phosphate: step 2/3. It functions in the pathway bacterial outer membrane biogenesis; lipopolysaccharide biosynthesis. This Rhodopseudomonas palustris (strain HaA2) protein is 2-dehydro-3-deoxyphosphooctonate aldolase.